We begin with the raw amino-acid sequence, 190 residues long: Bifunctional D-Ala-D-Ala dipeptidase and D-Ala-D-Ala carboxypeptidase VanXYC (190 aa).

Glu-66 is a binding site for Mg(2+). Positions 67, 88, 93, 95, and 102 each coordinate a dipeptide. Cu(2+) contacts are provided by His-95 and Asp-102. Zn(2+) contacts are provided by His-95 and Asp-102. Catalysis depends on Glu-153, which acts as the catalytic acid/base residue. Residues Trp-155 and His-156 each coordinate a dipeptide. Residue His-156 coordinates Cu(2+). His-156 serves as a coordination point for Zn(2+).

It belongs to the peptidase M15D family. Homodimer.

It localises to the cytoplasm. The catalysed reaction is D-alanyl-D-alanine + H2O = 2 D-alanine. The enzyme catalyses UDP-N-acetyl-alpha-D-muramoyl-L-alanyl-gamma-D-glutamyl-L-lysyl-D-alanyl-D-alanine + H2O = UDP-N-acetyl-alpha-D-muramoyl-L-alanyl-gamma-D-glutamyl-L-lysyl-D-alanine + D-alanine. Its function is as follows. Bifunctional enzyme, exhibiting dipeptidase and carboxypeptidase activities. Catalyzes hydrolysis of the D-alanyl-D-alanine dipeptide. Cleaves the C-terminal D-alanine residue of UDP-muramyl-pentapeptide[Ala] (UDP-MurNAc-L-Ala-D-Glu-L-Lys-D-Ala-D-Ala). Shows no activity against the pentapeptide with a C-terminal D-serine residue. Together with VanC/VanC1 and VanT, required for vancomycin resistance in E.gallinarum strain BM4174. The sequence is that of Bifunctional D-Ala-D-Ala dipeptidase and D-Ala-D-Ala carboxypeptidase VanXYC from Enterococcus gallinarum.